The sequence spans 276 residues: Undecaprenyl-diphosphatase 1 (276 aa).

5 helical membrane passes run 83-103 (FTLNVVIATIPAIALGLLFEK), 108-128 (VLFSPVPVAFALVVGGAIILW), 187-207 (VATEFSFFLAIPIIFGATLYE), 217-237 (VDSLGLFALGLVAAFVSAFVC), and 252-272 (VFAWYRIAFGLFVLLVGYSGW).

Belongs to the UppP family.

The protein localises to the cell inner membrane. It carries out the reaction di-trans,octa-cis-undecaprenyl diphosphate + H2O = di-trans,octa-cis-undecaprenyl phosphate + phosphate + H(+). Its function is as follows. Catalyzes the dephosphorylation of undecaprenyl diphosphate (UPP). Confers resistance to bacitracin. The chain is Undecaprenyl-diphosphatase 1 from Burkholderia cenocepacia (strain HI2424).